Reading from the N-terminus, the 479-residue chain is Cardiolipin synthase A (479 aa).

2 helical membrane-spanning segments follow: residues 8–28 (LLAY…IHAV) and 38–58 (IAWA…YLIF). 2 PLD phosphodiesterase domains span residues 218–245 (VNFR…GDEY) and 392–419 (TPGF…DNRS). Catalysis depends on residues histidine 223, lysine 225, aspartate 230, histidine 397, lysine 399, and aspartate 404.

Belongs to the phospholipase D family. Cardiolipin synthase subfamily. ClsA sub-subfamily.

It localises to the cell inner membrane. It catalyses the reaction 2 a 1,2-diacyl-sn-glycero-3-phospho-(1'-sn-glycerol) = a cardiolipin + glycerol. In terms of biological role, catalyzes the reversible phosphatidyl group transfer from one phosphatidylglycerol molecule to another to form cardiolipin (CL) (diphosphatidylglycerol) and glycerol. This is Cardiolipin synthase A from Pseudomonas fluorescens (strain SBW25).